Here is a 286-residue protein sequence, read N- to C-terminus: UDP-3-O-acyl-N-acetylglucosamine deacetylase (286 aa).

Residues histidine 79, histidine 237, and aspartate 241 each contribute to the Zn(2+) site. The active-site Proton donor is histidine 264.

It belongs to the LpxC family. The cofactor is Zn(2+).

The catalysed reaction is a UDP-3-O-[(3R)-3-hydroxyacyl]-N-acetyl-alpha-D-glucosamine + H2O = a UDP-3-O-[(3R)-3-hydroxyacyl]-alpha-D-glucosamine + acetate. It functions in the pathway glycolipid biosynthesis; lipid IV(A) biosynthesis; lipid IV(A) from (3R)-3-hydroxytetradecanoyl-[acyl-carrier-protein] and UDP-N-acetyl-alpha-D-glucosamine: step 2/6. Catalyzes the hydrolysis of UDP-3-O-myristoyl-N-acetylglucosamine to form UDP-3-O-myristoylglucosamine and acetate, the committed step in lipid A biosynthesis. This Brucella melitensis biotype 2 (strain ATCC 23457) protein is UDP-3-O-acyl-N-acetylglucosamine deacetylase.